Here is a 93-residue protein sequence, read N- to C-terminus: Phosphoribosyl-ATP pyrophosphatase (93 aa).

The protein belongs to the PRA-PH family.

It localises to the cytoplasm. It catalyses the reaction 1-(5-phospho-beta-D-ribosyl)-ATP + H2O = 1-(5-phospho-beta-D-ribosyl)-5'-AMP + diphosphate + H(+). The protein operates within amino-acid biosynthesis; L-histidine biosynthesis; L-histidine from 5-phospho-alpha-D-ribose 1-diphosphate: step 2/9. This chain is Phosphoribosyl-ATP pyrophosphatase, found in Corynebacterium aurimucosum (strain ATCC 700975 / DSM 44827 / CIP 107346 / CN-1) (Corynebacterium nigricans).